The chain runs to 237 residues: Ribonuclease PH (237 aa).

Residues arginine 86 and 124 to 126 each bind phosphate; that span reads GTR.

It belongs to the RNase PH family. As to quaternary structure, homohexameric ring arranged as a trimer of dimers.

The enzyme catalyses tRNA(n+1) + phosphate = tRNA(n) + a ribonucleoside 5'-diphosphate. Functionally, phosphorolytic 3'-5' exoribonuclease that plays an important role in tRNA 3'-end maturation. Removes nucleotide residues following the 3'-CCA terminus of tRNAs; can also add nucleotides to the ends of RNA molecules by using nucleoside diphosphates as substrates, but this may not be physiologically important. Probably plays a role in initiation of 16S rRNA degradation (leading to ribosome degradation) during starvation. The sequence is that of Ribonuclease PH from Zymomonas mobilis subsp. mobilis (strain ATCC 31821 / ZM4 / CP4).